Consider the following 514-residue polypeptide: Maturase K (514 aa).

It belongs to the intron maturase 2 family. MatK subfamily.

It localises to the plastid. Its subcellular location is the chloroplast. Functionally, usually encoded in the trnK tRNA gene intron. Probably assists in splicing its own and other chloroplast group II introns. This Encephalartos altensteinii (Altenstein's bread tree) protein is Maturase K.